The following is a 162-amino-acid chain: Putative colanic acid biosynthesis acetyltransferase WcaB (162 aa).

Belongs to the transferase hexapeptide repeat family.

It functions in the pathway slime biogenesis; slime polysaccharide biosynthesis. This is Putative colanic acid biosynthesis acetyltransferase WcaB (wcaB) from Escherichia coli O157:H7.